A 272-amino-acid polypeptide reads, in one-letter code: Acidic leucine-rich nuclear phosphoprotein 32 family member B (272 aa).

LRR repeat units lie at residues 18-38 (AVRELVLDNCKAMDGKIEGLT), 43-64 (NLEFLSLISVGLFSVSDLPKLP), 65-87 (KLKKLELSENRIFGGLDRLAEEL), and 89-110 (SLTHLNLSGNNLKDISTLEPLK). An LRRCT domain is found at 123-161 (CEVTNRSDYRETVFRLLPQLSYLDGYDREDQEAPDSDVE). Residues 149-254 (DREDQEAPDS…DEDEDEEEEE (106 aa)) show a composition bias toward acidic residues. The interval 149–272 (DREDQEAPDS…RETDDEGEDD (124 aa)) is disordered. Phosphoserine is present on residues Ser164 and Ser171. Basic and acidic residues predominate over residues 255-265 (SGKGEKRKRET). The short motif at 260-263 (KRKR) is the Nuclear localization signal element. At Thr265 the chain carries Phosphothreonine.

The protein belongs to the ANP32 family. In terms of assembly, interacts with histones H3 and H4. Interacts with KLF5; this interaction induces promoter region-specific histone incorporation and inhibition of histone acetylation by ANP32B. Post-translationally, some glutamate residues are glycylated by TTLL8. This modification occurs exclusively on glutamate residues and results in a glycine chain on the gamma-carboxyl group. Directly cleaved by caspase-3/CASP3.

It is found in the nucleus. Its function is as follows. Multifunctional protein that is involved in the regulation of many processes including cell proliferation, apoptosis, cell cycle progression or transcription. Regulates the proliferation of neuronal stem cells, differentiation of leukemic cells and progression from G1 to S phase of the cell cycle. As negative regulator of caspase-3-dependent apoptosis, may act as an antagonist of ANP32A in regulating tissue homeostasis. Exhibits histone chaperone properties, able to recruit histones to certain promoters, thus regulating the transcription of specific genes. Also plays an essential role in the nucleocytoplasmic transport of specific mRNAs via the uncommon nuclear mRNA export receptor XPO1/CRM1. Participates in the regulation of adequate adaptive immune responses by acting on mRNA expression and cell proliferation. This is Acidic leucine-rich nuclear phosphoprotein 32 family member B (Anp32b) from Mus musculus (Mouse).